Here is a 149-residue protein sequence, read N- to C-terminus: Calmodulin (149 aa).

Alanine 2 is modified (N-acetylalanine). 4 consecutive EF-hand domains span residues 8 to 43 (EQIAEFKEAFSLFDKDGDGTITTKELGTVMRSLGQN), 44 to 79 (PTEAELQDMINEVDADGNGTIDFPEFLTMMARKMKD), 81 to 116 (DSEEEIREAFRVFDKDGNGFISAAELRHVMTNLGEK), and 117 to 149 (LTDEEVDEMIREADIDGDGQVNYEEFVKMMTSK). Aspartate 21, aspartate 23, aspartate 25, threonine 27, glutamate 32, aspartate 57, aspartate 59, asparagine 61, threonine 63, glutamate 68, aspartate 94, aspartate 96, asparagine 98, and glutamate 105 together coordinate Ca(2+). Position 116 is an N6,N6,N6-trimethyllysine (lysine 116). The Ca(2+) site is built by aspartate 130, aspartate 132, aspartate 134, glutamine 136, and glutamate 141.

Belongs to the calmodulin family.

Functionally, calmodulin mediates the control of a large number of enzymes, ion channels and other proteins by Ca(2+). Among the enzymes to be stimulated by the calmodulin-Ca(2+) complex are a number of protein kinases and phosphatases. The chain is Calmodulin from Metridium senile (Brown sea anemone).